Consider the following 242-residue polypeptide: Venom nerve growth factor (242 aa).

The first 18 residues, 1–18 (MSMMCYTLIIAFLIGIWA), serve as a signal peptide directing secretion. The propeptide occupies 19–125 (APKSEDNVPL…TLNRNIRAKR (107 aa)). The span at 47-66 (GLKTSRNTDQRHPAPKKAED) shows a compositional bias: basic and acidic residues. The tract at residues 47–70 (GLKTSRNTDQRHPAPKKAEDQELG) is disordered. 3 disulfide bridges follow: C139–C203, C181–C231, and C191–C233. An N-linked (GlcNAc...) asparagine glycan is attached at N166.

It belongs to the NGF-beta family. In terms of assembly, homodimer; non-covalently linked. Expressed by the venom gland.

The protein resides in the secreted. Functionally, nerve growth factor is important for the development and maintenance of the sympathetic and sensory nervous systems. It stimulates division and differentiation of sympathetic and embryonic sensory neurons as well as basal forebrain cholinergic neurons in the brain. Its relevance in the snake venom is not clear. However, it has been shown to inhibit metalloproteinase-dependent proteolysis of platelet glycoprotein Ib alpha, suggesting a metalloproteinase inhibition to prevent metalloprotease autodigestion and/or protection against prey proteases. Binds a lipid between the two protein chains in the homodimer. The lipid-bound form promotes histamine relase from mouse mast cells, contrary to the lipid-free form. The chain is Venom nerve growth factor from Drysdalia coronoides (White-lipped snake).